The sequence spans 147 residues: Submaxillary gland androgen-regulated protein 3A (147 aa).

An N-terminal signal peptide occupies residues 1-22; that stretch reads MKPLNLVLGLCILVGCFLSCEC. A disordered region spans residues 27–128; it reads RRHDPRGPFP…ISITTPTARD (102 aa). A compositionally biased stretch (pro residues) spans 33–105; it reads GPFPPPPPPH…PTPSIPPTGP (73 aa). Tandem repeats lie at residues 43–54, 55–66, and 67–78. Residues 43–78 are 3 X 12 AA tandem repeats of G-P-G-I-G-R-P-[HP]-P-P-P-[PF]; that stretch reads GPGIGRPHPPPFGPGIGRPPPPPFGPGIGRPPPPPP. Residues 108-127 show a composition bias toward polar residues; it reads TVQATTMPAASISITTPTAR.

Belongs to the PROL1/PROL3 family. Secreted into saliva by submaxillary gland.

Its subcellular location is the secreted. Functionally, may play a role in protection or detoxification. This chain is Submaxillary gland androgen-regulated protein 3A (Smr3a), found in Mus musculus (Mouse).